Reading from the N-terminus, the 215-residue chain is MKPFVIAIDGPAASGKGTLARKIATHYHLHYLDTGLTYRGVAHALLQQKLALDDEKNALVYARELDFNTLNPALLSSHELGNAASKIAIIPTVRETLVAKQRNFAKILPGSVLDGRDIGTIVCPDADVKLYVLANVQIRAKRRYQEILKKGAQADYHEILVNLEQRDSRDITRKQSPLKQAKDAYLLDTSELSIEATFTVACALIDPIIKARIIG.

10–18 (GPAASGKGT) serves as a coordination point for ATP.

It belongs to the cytidylate kinase family. Type 1 subfamily.

The protein localises to the cytoplasm. It carries out the reaction CMP + ATP = CDP + ADP. It catalyses the reaction dCMP + ATP = dCDP + ADP. The sequence is that of Cytidylate kinase from Bartonella henselae (strain ATCC 49882 / DSM 28221 / CCUG 30454 / Houston 1) (Rochalimaea henselae).